The sequence spans 248 residues: Tetrachloro-P-hydroquinone reductive dehalogenase (248 aa).

The region spanning 2–84 (PEVSLYNYTM…EAAKLGKVGI (83 aa)) is the GST N-terminal domain. The 116-residue stretch at 133–248 (YAEKYPELRS…RVMPNWKGGI (116 aa)) folds into the GST C-terminal domain.

Belongs to the GST superfamily. In terms of assembly, homodimer.

It carries out the reaction 2,6-dichlorohydroquinone + glutathione disulfide + chloride + H(+) = 2,3,6-trichlorohydroquinone + 2 glutathione. It catalyses the reaction 2,3,6-trichlorohydroquinone + glutathione disulfide + chloride = 2,3,5,6-tetrachlorohydroquinone + 2 glutathione. It functions in the pathway xenobiotic degradation; pentachlorophenol degradation. Functionally, sequential reduction of tetrachloro-p-hydroquinone to monochlorophenol, using glutathione as the reducing agent. The polypeptide is Tetrachloro-P-hydroquinone reductive dehalogenase (pcpC) (Sphingobium chlorophenolicum).